The following is a 305-amino-acid chain: GMP synthase [glutamine-hydrolyzing] subunit B (305 aa).

Residues 2-185 enclose the GMPS ATP-PPase domain; it reads VNVDEFIEEA…LDLEEIISER (184 aa). 29–35 contributes to the ATP binding site; it reads SGGVDSS.

Heterodimer composed of a glutamine amidotransferase subunit (A) and a GMP-binding subunit (B).

It carries out the reaction XMP + L-glutamine + ATP + H2O = GMP + L-glutamate + AMP + diphosphate + 2 H(+). The protein operates within purine metabolism; GMP biosynthesis; GMP from XMP (L-Gln route): step 1/1. Its function is as follows. Catalyzes the synthesis of GMP from XMP. The polypeptide is GMP synthase [glutamine-hydrolyzing] subunit B (Haloarcula marismortui (strain ATCC 43049 / DSM 3752 / JCM 8966 / VKM B-1809) (Halobacterium marismortui)).